The following is a 518-amino-acid chain: Protein nucleotidyltransferase YdiU (518 aa).

8 residues coordinate ATP: glycine 100, glycine 102, arginine 103, lysine 123, aspartate 135, glycine 136, arginine 193, and arginine 200. Aspartate 270 acts as the Proton acceptor in catalysis. Asparagine 271 and aspartate 280 together coordinate Mg(2+). An ATP-binding site is contributed by aspartate 280.

Belongs to the SELO family. Mg(2+) is required as a cofactor. It depends on Mn(2+) as a cofactor.

It catalyses the reaction L-seryl-[protein] + ATP = 3-O-(5'-adenylyl)-L-seryl-[protein] + diphosphate. It carries out the reaction L-threonyl-[protein] + ATP = 3-O-(5'-adenylyl)-L-threonyl-[protein] + diphosphate. The enzyme catalyses L-tyrosyl-[protein] + ATP = O-(5'-adenylyl)-L-tyrosyl-[protein] + diphosphate. The catalysed reaction is L-histidyl-[protein] + UTP = N(tele)-(5'-uridylyl)-L-histidyl-[protein] + diphosphate. It catalyses the reaction L-seryl-[protein] + UTP = O-(5'-uridylyl)-L-seryl-[protein] + diphosphate. It carries out the reaction L-tyrosyl-[protein] + UTP = O-(5'-uridylyl)-L-tyrosyl-[protein] + diphosphate. Its function is as follows. Nucleotidyltransferase involved in the post-translational modification of proteins. It can catalyze the addition of adenosine monophosphate (AMP) or uridine monophosphate (UMP) to a protein, resulting in modifications known as AMPylation and UMPylation. This chain is Protein nucleotidyltransferase YdiU, found in Xanthomonas oryzae pv. oryzae (strain MAFF 311018).